A 281-amino-acid chain; its full sequence is Putative phosphoenolpyruvate synthase regulatory protein (281 aa).

ADP is bound at residue 161-168 (GVSRSGKT).

This sequence belongs to the pyruvate, phosphate/water dikinase regulatory protein family. PSRP subfamily.

The catalysed reaction is [pyruvate, water dikinase] + ADP = [pyruvate, water dikinase]-phosphate + AMP + H(+). It carries out the reaction [pyruvate, water dikinase]-phosphate + phosphate + H(+) = [pyruvate, water dikinase] + diphosphate. Bifunctional serine/threonine kinase and phosphorylase involved in the regulation of the phosphoenolpyruvate synthase (PEPS) by catalyzing its phosphorylation/dephosphorylation. The chain is Putative phosphoenolpyruvate synthase regulatory protein from Herminiimonas arsenicoxydans.